The primary structure comprises 487 residues: Glutamyl-tRNA(Gln) amidotransferase subunit A (487 aa).

Catalysis depends on charge relay system residues Lys-74 and Ser-149. Residue Ser-173 is the Acyl-ester intermediate of the active site.

This sequence belongs to the amidase family. GatA subfamily. As to quaternary structure, heterotrimer of A, B and C subunits.

It catalyses the reaction L-glutamyl-tRNA(Gln) + L-glutamine + ATP + H2O = L-glutaminyl-tRNA(Gln) + L-glutamate + ADP + phosphate + H(+). Functionally, allows the formation of correctly charged Gln-tRNA(Gln) through the transamidation of misacylated Glu-tRNA(Gln) in organisms which lack glutaminyl-tRNA synthetase. The reaction takes place in the presence of glutamine and ATP through an activated gamma-phospho-Glu-tRNA(Gln). The chain is Glutamyl-tRNA(Gln) amidotransferase subunit A from Prochlorococcus marinus (strain MIT 9211).